A 306-amino-acid polypeptide reads, in one-letter code: Elongation factor Ts (306 aa).

Positions threonine 80–valine 83 are involved in Mg(2+) ion dislocation from EF-Tu.

The protein belongs to the EF-Ts family.

The protein localises to the cytoplasm. Associates with the EF-Tu.GDP complex and induces the exchange of GDP to GTP. It remains bound to the aminoacyl-tRNA.EF-Tu.GTP complex up to the GTP hydrolysis stage on the ribosome. The chain is Elongation factor Ts from Leptothrix cholodnii (strain ATCC 51168 / LMG 8142 / SP-6) (Leptothrix discophora (strain SP-6)).